Here is a 369-residue protein sequence, read N- to C-terminus: Replication factor C subunit 5 (369 aa).

The segment at 21–40 is disordered; sequence INKGKDVVGFGPPPQSKATP. Position 79 to 86 (79 to 86) interacts with ATP; that stretch reads GPPGTGKT.

The protein belongs to the activator 1 small subunits family. As to quaternary structure, heterotetramer of subunits RFC2, RFC3, RFC4 and RFC5 that can form a complex with RFC1.

The protein localises to the nucleus. In terms of biological role, functions in cell replication and proliferation. May be involved in chromatin assembly and remodeling. Plays a role in the negative control of pathogenesis-related gene expression and systemic acquired resistance (SAR). This is Replication factor C subunit 5 (RFC5) from Arabidopsis thaliana (Mouse-ear cress).